The sequence spans 247 residues: 5'-nucleotidase SurE (247 aa).

A divalent metal cation contacts are provided by D8, D9, S39, and N91.

This sequence belongs to the SurE nucleotidase family. A divalent metal cation is required as a cofactor.

Its subcellular location is the cytoplasm. The enzyme catalyses a ribonucleoside 5'-phosphate + H2O = a ribonucleoside + phosphate. Its function is as follows. Nucleotidase that shows phosphatase activity on nucleoside 5'-monophosphates. The polypeptide is 5'-nucleotidase SurE (Methylobacillus flagellatus (strain ATCC 51484 / DSM 6875 / VKM B-1610 / KT)).